The sequence spans 513 residues: Nitrogenase molybdenum-iron protein beta chain (513 aa).

The [8Fe-7S] cluster site is built by cysteine 70, cysteine 95, and cysteine 153.

Belongs to the NifD/NifK/NifE/NifN family. As to quaternary structure, tetramer of two alpha and two beta chains. Forms complex with the iron protein (nitrogenase component 2). [8Fe-7S] cluster serves as cofactor.

The enzyme catalyses N2 + 8 reduced [2Fe-2S]-[ferredoxin] + 16 ATP + 16 H2O = H2 + 8 oxidized [2Fe-2S]-[ferredoxin] + 2 NH4(+) + 16 ADP + 16 phosphate + 6 H(+). Functionally, this molybdenum-iron protein is part of the nitrogenase complex that catalyzes the key enzymatic reactions in nitrogen fixation. The protein is Nitrogenase molybdenum-iron protein beta chain (nifK1) of Sinorhizobium fredii (strain NBRC 101917 / NGR234).